The sequence spans 261 residues: Non-homologous end joining protein Ku 1 (261 aa).

One can recognise a Ku domain in the interval 12–171 (SFSLVAIPVQ…LITLHYSDEV (160 aa)).

It belongs to the prokaryotic Ku family. As to quaternary structure, homodimer. Interacts with LigD.

Functionally, with LigD forms a non-homologous end joining (NHEJ) DNA repair enzyme, which repairs dsDNA breaks with reduced fidelity. Binds linear dsDNA with 5'- and 3'- overhangs but not closed circular dsDNA nor ssDNA. Recruits and stimulates the ligase activity of LigD. The polypeptide is Non-homologous end joining protein Ku 1 (Geotalea uraniireducens (strain Rf4) (Geobacter uraniireducens)).